Reading from the N-terminus, the 423-residue chain is Glutamate-1-semialdehyde 2,1-aminomutase (423 aa).

An N6-(pyridoxal phosphate)lysine modification is found at lysine 258.

It belongs to the class-III pyridoxal-phosphate-dependent aminotransferase family. HemL subfamily. Pyridoxal 5'-phosphate is required as a cofactor.

It is found in the cytoplasm. The enzyme catalyses (S)-4-amino-5-oxopentanoate = 5-aminolevulinate. It participates in porphyrin-containing compound metabolism; protoporphyrin-IX biosynthesis; 5-aminolevulinate from L-glutamyl-tRNA(Glu): step 2/2. This is Glutamate-1-semialdehyde 2,1-aminomutase from Pyrobaculum aerophilum (strain ATCC 51768 / DSM 7523 / JCM 9630 / CIP 104966 / NBRC 100827 / IM2).